We begin with the raw amino-acid sequence, 666 residues long: Nuclear distribution protein nudE homolog 1 (666 aa).

The stretch at 14–195 (EEEIAHYREK…KDQLARAIAT (182 aa)) forms a coiled coil. Disordered regions lie at residues 40 to 64 (EFQQ…KQQA), 220 to 310 (DDIN…SGIP), 369 to 388 (KRVT…PAPH), and 397 to 666 (DHNT…KVKK). Over residues 251–274 (RSGTMSSIPVASPSTKRFSQQIPH) the composition is skewed to polar residues. Composition is skewed to low complexity over residues 275–287 (SPSF…STTS) and 372–383 (TSTTSTTSSTTT). Positions 400–410 (TTPTAQSQQFP) are enriched in polar residues. 3 stretches are compositionally biased toward low complexity: residues 449–465 (PTFR…LPSR), 473–485 (ASGS…SGTA), and 536–554 (SATP…STSN). 2 stretches are compositionally biased toward polar residues: residues 587–599 (RQSL…TPTT) and 614–638 (SSLS…SGRP).

It belongs to the nudE family. As to quaternary structure, self-associates. Interacts with PAC1.

Its subcellular location is the cytoplasm. The protein resides in the cytoskeleton. Required for nuclear migration. The polypeptide is Nuclear distribution protein nudE homolog 1 (NDE1) (Cryptococcus neoformans var. neoformans serotype D (strain B-3501A) (Filobasidiella neoformans)).